The sequence spans 127 residues: Trefoil factor 2 (127 aa).

The N-terminal stretch at 1 to 21 is a signal peptide; that stretch reads EPQRPAPGHPPPAGAVCLTGA. Residue Gln22 is modified to Pyrrolidone carboxylic acid. 2 P-type domains span residues 27 to 71 and 77 to 120; these read CRCS…FKPL and EECV…FFPM. Cystine bridges form between Cys27/Cys125, Cys29/Cys56, Cys40/Cys55, Cys50/Cys67, Cys79/Cys105, Cys89/Cys104, and Cys99/Cys116.

In terms of tissue distribution, found in pancreas.

Its subcellular location is the secreted. Its function is as follows. Inhibits gastrointestinal motility and gastric acid secretion. Could function as a structural component of gastric mucus, possibly by stabilizing glycoproteins in the mucus gel through interactions with carbohydrate side chains. In Sus scrofa (Pig), this protein is Trefoil factor 2 (TFF2).